A 421-amino-acid chain; its full sequence is Imidazolonepropionase (421 aa).

H81 and H83 together coordinate Fe(3+). Zn(2+) contacts are provided by H81 and H83. 4-imidazolone-5-propanoate-binding residues include R90, Y153, and H186. Residue Y153 coordinates N-formimidoyl-L-glutamate. A Fe(3+)-binding site is contributed by H251. H251 is a Zn(2+) binding site. E254 serves as a coordination point for 4-imidazolone-5-propanoate. Residue D326 participates in Fe(3+) binding. A Zn(2+)-binding site is contributed by D326. 2 residues coordinate N-formimidoyl-L-glutamate: N328 and G330. S331 contacts 4-imidazolone-5-propanoate.

Belongs to the metallo-dependent hydrolases superfamily. HutI family. It depends on Zn(2+) as a cofactor. Fe(3+) is required as a cofactor.

The protein localises to the cytoplasm. It catalyses the reaction 4-imidazolone-5-propanoate + H2O = N-formimidoyl-L-glutamate. It functions in the pathway amino-acid degradation; L-histidine degradation into L-glutamate; N-formimidoyl-L-glutamate from L-histidine: step 3/3. Its function is as follows. Catalyzes the hydrolytic cleavage of the carbon-nitrogen bond in imidazolone-5-propanoate to yield N-formimidoyl-L-glutamate. It is the third step in the universal histidine degradation pathway. This chain is Imidazolonepropionase, found in Streptococcus pyogenes serotype M12 (strain MGAS2096).